A 348-amino-acid chain; its full sequence is Protein RecA (348 aa).

G68 to T75 serves as a coordination point for ATP.

The protein belongs to the RecA family.

Its subcellular location is the cytoplasm. Its function is as follows. Can catalyze the hydrolysis of ATP in the presence of single-stranded DNA, the ATP-dependent uptake of single-stranded DNA by duplex DNA, and the ATP-dependent hybridization of homologous single-stranded DNAs. It interacts with LexA causing its activation and leading to its autocatalytic cleavage. This chain is Protein RecA, found in Rhodococcus opacus (strain B4).